A 432-amino-acid chain; its full sequence is MSAYSPLSAQLDADTDVDVESTRTEGRRKMEWTLQHMPILQELRARFAETKPLAGETIGMAMHVEAKTANLVELLALGGAEVAITGCNPLSTHDDVSAALDSNENVTSYAKRGVDEEAYYDAIEAVVAHEPTITIDDGMDMVYAIHEDHPDLLDTIIGGAEETTTGVHRLRAMDEDDELQYPVFAVNDTPMKRLFDNVHGTGESALATIAMTTNLSYAGKNVVVAGYGYCGKGVAQKAAGQNANVIVTEVEPRRALEAHMEGYEVMPMNEAATRGDVFVTTTGNRDVITQEDFEVMSDGAILANAGHFDVEINLEELSELAIDTYEARDGVQAYELGDGRRLNVLAEGRLVNLAAPIALGHPAEVMDQSFGIQAVCVRELIENKSSYDAGVHNVPDELDREVAEIKLKAEGVDIDSLTQTQSEYLDSWSHGT.

The disordered stretch occupies residues 1-24 (MSAYSPLSAQLDADTDVDVESTRT). Residues Asp137 and Glu162 each contribute to the substrate site. Residue 163–165 (TTT) coordinates NAD(+). Substrate-binding residues include Lys192 and Asp196. NAD(+) is bound by residues Asn197, 226–231 (GYGYCG), Glu249, Asn284, 305–307 (AGH), and Asn352.

The protein belongs to the adenosylhomocysteinase family. NAD(+) is required as a cofactor.

It is found in the cytoplasm. The enzyme catalyses S-adenosyl-L-homocysteine + H2O = L-homocysteine + adenosine. It functions in the pathway amino-acid biosynthesis; L-homocysteine biosynthesis; L-homocysteine from S-adenosyl-L-homocysteine: step 1/1. Functionally, may play a key role in the regulation of the intracellular concentration of adenosylhomocysteine. This chain is Adenosylhomocysteinase, found in Haloquadratum walsbyi (strain DSM 16790 / HBSQ001).